The sequence spans 320 residues: Epoxidase atD (320 aa).

N245 and N299 each carry an N-linked (GlcNAc...) asparagine glycan.

It functions in the pathway secondary metabolite biosynthesis. Functionally, epoxidase; part of the gene cluster that mediates the biosynthesis of terreic acid, a quinone epoxide inhibitor of Bruton's tyrosine kinase. The first step of the pathway is the synthesis of 6-methylsalicylic acid (6-MSA) by the 6-methylsalicylic acid synthase atX. In the biosynthesis of 6-MSA, atX utilizes one acetyl-CoA and three malonyl-CoAs as its substrates and catalyzes a series of programmed reactions including Claisen condensation, reduction, aldol cyclization, and the hydrolytic cleavage that yields 6-MSA. The 6-methylsalicylate 1-monooxygenase atA then catalyzes the decarboxylative hydroxylation of 6-MSA to 3-methylcatechol. The next step is the conversion of 3-methylcatechol to 3-methyl-1,2,4-benzenetriol by cytochrome P450 monooxygenase atE, which is enhanced by cytochrome P450 monooxygenase atG. Then, the epoxidase atD catalyzes the epoxidation and hydroxyl oxidation of 3-methyl-1,2,4-benzenetriol to terremutin. Lastly, GMC oxidoreductase atC oxidizes terremutin to terreic acid. The sequence is that of Epoxidase atD from Aspergillus terreus (strain NIH 2624 / FGSC A1156).